A 59-amino-acid polypeptide reads, in one-letter code: Conotoxin reg3.15 (59 aa).

The first 15 residues, 1–15 (RVLLTICLLLFPLTA), serve as a signal peptide directing secretion. A propeptide spanning residues 16–44 (IPLGGDQPAERMRNVRSAVQDPRFDSVGW) is cleaved from the precursor. Intrachain disulfides connect C45–C59, C46–C55, and C51–C58.

Belongs to the conotoxin M superfamily. As to expression, expressed by the venom duct.

Its subcellular location is the secreted. The protein is Conotoxin reg3.15 of Conus regius (Crown cone).